A 252-amino-acid polypeptide reads, in one-letter code: Imidazole glycerol phosphate synthase subunit HisF (252 aa).

Residues Asp-11 and Asp-130 contribute to the active site.

The protein belongs to the HisA/HisF family. In terms of assembly, heterodimer of HisH and HisF.

Its subcellular location is the cytoplasm. It carries out the reaction 5-[(5-phospho-1-deoxy-D-ribulos-1-ylimino)methylamino]-1-(5-phospho-beta-D-ribosyl)imidazole-4-carboxamide + L-glutamine = D-erythro-1-(imidazol-4-yl)glycerol 3-phosphate + 5-amino-1-(5-phospho-beta-D-ribosyl)imidazole-4-carboxamide + L-glutamate + H(+). Its pathway is amino-acid biosynthesis; L-histidine biosynthesis; L-histidine from 5-phospho-alpha-D-ribose 1-diphosphate: step 5/9. Functionally, IGPS catalyzes the conversion of PRFAR and glutamine to IGP, AICAR and glutamate. The HisF subunit catalyzes the cyclization activity that produces IGP and AICAR from PRFAR using the ammonia provided by the HisH subunit. The sequence is that of Imidazole glycerol phosphate synthase subunit HisF from Aromatoleum aromaticum (strain DSM 19018 / LMG 30748 / EbN1) (Azoarcus sp. (strain EbN1)).